A 284-amino-acid polypeptide reads, in one-letter code: Bifunctional protein FolD 1 (284 aa).

NADP(+)-binding positions include 166-168 (GAS) and isoleucine 232.

This sequence belongs to the tetrahydrofolate dehydrogenase/cyclohydrolase family. As to quaternary structure, homodimer.

It catalyses the reaction (6R)-5,10-methylene-5,6,7,8-tetrahydrofolate + NADP(+) = (6R)-5,10-methenyltetrahydrofolate + NADPH. It carries out the reaction (6R)-5,10-methenyltetrahydrofolate + H2O = (6R)-10-formyltetrahydrofolate + H(+). It functions in the pathway one-carbon metabolism; tetrahydrofolate interconversion. In terms of biological role, catalyzes the oxidation of 5,10-methylenetetrahydrofolate to 5,10-methenyltetrahydrofolate and then the hydrolysis of 5,10-methenyltetrahydrofolate to 10-formyltetrahydrofolate. The protein is Bifunctional protein FolD 1 of Pseudomonas savastanoi pv. phaseolicola (strain 1448A / Race 6) (Pseudomonas syringae pv. phaseolicola (strain 1448A / Race 6)).